The primary structure comprises 902 residues: Cytosolic 10-formyltetrahydrofolate dehydrogenase (902 aa).

The tract at residues 1–310 is hydrolase domain; the sequence is MKIAVIGQSL…LASNFFKGAA (310 aa). At Ser-9 the chain carries Phosphoserine. Lys-38 carries the N6-succinyllysine modification. Residue 88 to 90 participates in (6R)-10-formyltetrahydrofolate binding; that stretch reads QFI. Residue His-106 is the Proton donor of the active site. A (6R)-10-formyltetrahydrofolate-binding site is contributed by Asp-142. The 78-residue stretch at 318–395 folds into the Carrier domain; the sequence is EAELVTAEAV…DFIQLLVRKL (78 aa). Ser-354 carries the post-translational modification O-(pantetheine 4'-phosphoryl)serine. The interval 417–902 is aldehyde dehydrogenase domain; that stretch reads TVRMPHQLFI…LRVKTVTFEY (486 aa). Residues 571–573 and 597–600 contribute to the NADP(+) site; these read IPW and KPAQ. Residues Ser-629 and Ser-631 each carry the phosphoserine modification. NADP(+) contacts are provided by residues 630-635 and 650-651; these read GSLVGQ and GS. Lys-660 is subject to N6-succinyllysine. The Proton acceptor role is filled by Glu-673. 673 to 674 serves as a coordination point for NADP(+); sequence EL. Cys-707 acts as the Proton donor in catalysis. Lys-757 is a binding site for NADP(+). Lys-767 carries the post-translational modification N6-succinyllysine. An NADP(+)-binding site is contributed by 804–806; sequence ESF. Phosphoserine is present on Ser-825. An N6-acetyllysine modification is found at Lys-882.

The protein in the N-terminal section; belongs to the GART family. This sequence in the C-terminal section; belongs to the aldehyde dehydrogenase family. ALDH1L subfamily. Homotetramer. Post-translationally, phosphopantetheinylation at Ser-354 by AASDHPPT is required for the formyltetrahydrofolate dehydrogenase activity. Highly expressed in liver, pancreas and kidney.

Its subcellular location is the cytoplasm. It localises to the cytosol. It catalyses the reaction (6R)-10-formyltetrahydrofolate + NADP(+) + H2O = (6S)-5,6,7,8-tetrahydrofolate + CO2 + NADPH + H(+). Cytosolic 10-formyltetrahydrofolate dehydrogenase that catalyzes the NADP(+)-dependent conversion of 10-formyltetrahydrofolate to tetrahydrofolate and carbon dioxide. May also have an NADP(+)-dependent aldehyde dehydrogenase activity towards formaldehyde, acetaldehyde, propionaldehyde, and benzaldehyde. The chain is Cytosolic 10-formyltetrahydrofolate dehydrogenase from Homo sapiens (Human).